A 23-amino-acid polypeptide reads, in one-letter code: Cytochrome c3-1 (23 aa).

A disordered region spans residues 1–23; that stretch reads AAPKAPADGLKMDKTKQXVVFNH. A heme-binding site is contributed by H23.

Binds 4 heme groups per subunit.

It localises to the periplasm. In terms of biological role, participates in sulfate respiration coupled with phosphorylation by transferring electrons from the enzyme dehydrogenase to ferredoxin. In Nitratidesulfovibrio vulgaris (Desulfovibrio vulgaris), this protein is Cytochrome c3-1.